Reading from the N-terminus, the 498-residue chain is Minor fimbrium subunit Mfa1 (498 aa).

A signal peptide spans 1 to 19 (MKLNKMFLVGALLSLGFAS). The N-palmitoyl cysteine moiety is linked to residue cysteine 20. Cysteine 20 carries the S-diacylglycerol cysteine lipid modification. The propeptide occupies 20-50 (CSKEGNGPAPDSSSTADTHMSVSMSLPQHNR). The interval 436–476 (SGNPFVPTDPDPNNPDTPDNPDTPDPEDPDTPNPEEPLPVQ) is disordered.

This sequence belongs to the bacteroidetes fimbrillin superfamily. FimA/Mfa1 family. In terms of assembly, structural component of the fimbrial stalk. Minor fimbriae are composed of a structural subunit, most often Mfa1, and the accessory subunits Mfa3, Mfa4 and Mfa5. Mfa1 interacts with Mfa2; this anchors the fimbrium in the membrane. Fimbrium assembly occurs by linear, head-to-tail oligomerization of fimbrial subunits. This is mediated via insertion of a C-terminal beta-strand from one subunit into a groove in the N-terminal domain of the following subunit.

Its subcellular location is the fimbrium. The protein resides in the cell outer membrane. In terms of biological role, structural subunit of the minor fimbriae. These filamentous pili are attached to the cell surface; they mediate biofilm formation, adhesion onto host cells and onto other bacteria that are part of the oral microbiome. They play an important role in invasion of periodontal tissues and are recognized as major virulence factors. Mfa1 orthologs from different strains have highly divergent sequences, and this correlates with pathogenicity. In Porphyromonas gingivalis (Bacteroides gingivalis), this protein is Minor fimbrium subunit Mfa1.